The following is a 3122-amino-acid chain: tRNA nuclease CdiA-2 (3122 aa).

The interval 36–205 is two-partner system transport domain (TPS); sequence RAGVVPAWLS…ATLTTGNPNF (170 aa). A helical membrane pass occupies residues 54–74; the sequence is VALAVLVAAGVVPIWVNAQVV. The FHA-1 stretch occupies residues 256–1254; sequence VVAGSNQVDY…GGSVAIQASG (999 aa). Residues 492 to 512 are disordered; sequence GMTLGGGSLSNQGGRANSQGP. A compositionally biased stretch (polar residues) spans 500-512; the sequence is LSNQGGRANSQGP. The receptor binding domain (RBD) stretch occupies residues 1345-1635; the sequence is TRRVMQTSGN…SATAVNVLSN (291 aa). Positions 1790 to 1845 are periplasmic FHA-1 repeat (pFR); it reads TAGNIDLKNTQVFTNSGTVKADTTLALQGKQIDNAFGALQSGGLTSLDTTGNVDLT. Positions 1947–2085 are FHA-2; that stretch reads SDTDLNSATG…TERHVYNSRE (139 aa). Disordered regions lie at residues 2002–2031, 2151–2174, and 2325–2352; these read TSTI…ALTG, TTSQ…MSGG, and IGVQ…GSSI. The pretoxin (PT) domain stretch occupies residues 2086-2825; it reads THSRSGVVSG…SAGAAMASNV (740 aa). 2 stretches are compositionally biased toward low complexity: residues 2151-2170 and 2325-2341; these read TTSQ…HSGL and IGVQ…MQSS. Polar residues predominate over residues 2342–2352; sequence EDQTIQRGSSI. The interval 2821 to 3122 is C-terminal effector domain (CT), has tRNA nuclease activity; that stretch reads MASNVELYNA…NITIIKPKGN (302 aa). Residues 2826–2829 carry the ELYN C-terminal motif motif; that stretch reads ELYN. The interval 2948–3000 is disordered; the sequence is GATDRTPPSNAILSNSNSDNNSTQGSQSGTVTKTPNPEATGSLSGKPTQIPPL. Residues 2948-3122 form a truncated CT domain, has tRNA nuclease activity, sufficient for interaction with CdiI-2 region; sequence GATDRTPPSN…NITIIKPKGN (175 aa). Polar residues predominate over residues 2953 to 2994; it reads TPPSNAILSNSNSDNNSTQGSQSGTVTKTPNPEATGSLSGKP. A has tRNase activity region spans residues 2987–3122; that stretch reads TGSLSGKPTQ…NITIIKPKGN (136 aa). Catalysis depends on residues glutamate 3012, aspartate 3039, aspartate 3048, and lysine 3067.

It in the N-terminal section; belongs to the CdiA toxin family. As to quaternary structure, interacts with cognate immunity protein CdiI, which blocks its tRNA nuclease activity. The truncated CT fragment (residues 2948-3122) specifically interacts with cognate CdiI which inhibits the tRNA nuclease activity. The truncated CT is more stable in vitro than the original CT fragment characterized in E.coli.

It is found in the membrane. Its subcellular location is the secreted. The protein localises to the target cell. It localises to the target cell cytoplasm. In terms of biological role, toxic component of a toxin-immunity protein module, which functions as a cellular contact-dependent growth inhibition (CDI) system. CDI modules allow bacteria to communicate with and inhibit the growth of closely related neighboring bacteria in a contact-dependent fashion. The C-terminal 301 residues (the CT fragment) cleaves near the C-terminus of E.coli tRNA1B(Ala), probably preventing tRNA charging, and inhibits growth in E.coli. A truncated CT fragment (residues 2948-3122) has tRNA endonuclease activity on several B.thailandensis tRNAs as well as tRNA2(Arg) where it cleaves after A-70 and U-71. Inactive CT domain binds tRNA, probably in a 1:1 complex. Toxic activity is neutralized by coexpression of the cognate immunity protein CdiI in E.coli, but not by non-cognate immunity proteins from other strains of B.pseudomallei. May use lipopolysaccharide as its target cell receptor. Probably gains access to the cytoplasm of target cells (B.thailandensis strain E264) by using integral inner membrane protein BTH_II0599. Protein BTH_I0359 is also implicated in an unknown fashion in CDI in B.thailandensis strain E264. Its function is as follows. Expression of this cdiAIB locus in B.thailandensis confers protection against other bacteria carrying the locus; growth inhibition requires cellular contact. The CdiA protein is thought to be exported from the cell through the central lumen of CdiB, the other half of its two-partner system (TPS). The TPS domain probably remains associated with CdiB while the FHA-1 domain forms an extended filament with the receptor-binding domain (RBD) at its extremity; in the secretion arrested state the C-terminus of the RBD domain form a hairpin-like structure as the FHA-2, PT and CT domains are periplasmic. Upon binding to a target cell outer membrane receptor (possibly a lipoprotein in this CDI) a signal is transmitted to activate secretion. The filament elongates slightly, the rest of CdiA is secreted and the FHA-2 domain becomes stably associated with the target cell's outer membrane where it facilitates entry of the toxic CT domain into the target cell periplasm. From there the toxic CT domain is cleaved and gains access to the target cell cytoplasm via an inner membrane protein (probably inner membrane protein BTH_II0599). This chain is tRNA nuclease CdiA-2 (cdiA2), found in Burkholderia pseudomallei (strain 1026b).